We begin with the raw amino-acid sequence, 96 residues long: MEQAPEDQGPQREPYNDWTLELLEELKNEAVRHFPRIWLHSLGQHIYETYGDTWTGVEALIRILQQLLFIHFRIGCRHSRIGIIQQRRTRNGASKS.

The tract at residues 1–42 (MEQAPEDQGPQREPYNDWTLELLEELKNEAVRHFPRIWLHSL) is homooligomerization. Phosphoserine; by host is present on residues Ser-79, Ser-94, and Ser-96.

It belongs to the HIV-1 VPR protein family. As to quaternary structure, homooligomer, may form homodimer. Interacts with p6-gag region of the Pr55 Gag precursor protein through a (Leu-X-X)4 motif near the C-terminus of the P6gag protein. Interacts with host UNG. May interact with host RAD23A/HHR23A. Interacts with host VPRBP/DCAF1, leading to hijack the CUL4A-RBX1-DDB1-DCAF1/VPRBP complex, mediating ubiquitination of host proteins such as TERT and ZGPAT and arrest of the cell cycle in G2 phase. Post-translationally, phosphorylated on several residues by host. These phosphorylations regulate VPR activity for the nuclear import of the HIV-1 pre-integration complex.

It localises to the virion. The protein localises to the host nucleus. Its subcellular location is the host extracellular space. Its function is as follows. During virus replication, may deplete host UNG protein, and incude G2-M cell cycle arrest. Acts by targeting specific host proteins for degradation by the 26S proteasome, through association with the cellular CUL4A-DDB1 E3 ligase complex by direct interaction with host VPRPB/DCAF-1. Cell cycle arrest reportedly occurs within hours of infection and is not blocked by antiviral agents, suggesting that it is initiated by the VPR carried into the virion. Additionally, VPR induces apoptosis in a cell cycle dependent manner suggesting that these two effects are mechanistically linked. Detected in the serum and cerebrospinal fluid of AIDS patient, VPR may also induce cell death to bystander cells. Functionally, during virus entry, plays a role in the transport of the viral pre-integration (PIC) complex to the host nucleus. This function is crucial for viral infection of non-dividing macrophages. May act directly at the nuclear pore complex, by binding nucleoporins phenylalanine-glycine (FG)-repeat regions. In Human immunodeficiency virus type 1 group M subtype B (strain 89.6) (HIV-1), this protein is Protein Vpr.